The primary structure comprises 115 residues: MNAPPAFESFLLFEGEKITINKDTKVPNACLFTINKEDHTLGNIIKSQLLKDPQVLFAGYKVPHPLEHKIIIRVQTTPDYSPQEAFTNAITDLISELSLLEERFRTCLLPLRLLP.

Belongs to the archaeal Rpo11/eukaryotic RPB11/RPC19 RNA polymerase subunit family. In terms of assembly, component of the RNA polymerase II (Pol II) complex consisting of 12 subunits.

The protein localises to the nucleus. DNA-dependent RNA polymerase catalyzes the transcription of DNA into RNA using the four ribonucleoside triphosphates as substrates. Component of RNA polymerase II which synthesizes mRNA precursors and many functional non-coding RNAs. Pol II is the central component of the basal RNA polymerase II transcription machinery. It is composed of mobile elements that move relative to each other. RPB11 is part of the core element with the central large cleft. The chain is DNA-directed RNA polymerase II subunit RPB11-b2 (POLR2J3) from Homo sapiens (Human).